Consider the following 273-residue polypeptide: MMKTLSSLLLLFSVSLQAAPIERVISLAPHATEIAYAAGLGDKLIAVSEMSDYPEAAKKLEKVSNYKGINLEKIITLKPDLILAWPAGNPAKELEKLEQFGFKIYYSQTKSLKDIGDNIEQLSQYSDDPQIGLNNARDYRTHLEALRAKYQNLPKTRYFYQLSDTPIITVAGQNWPTEVFRFCGGENVFDGASAPYPQVSIEQVILKRPQAMFVSPHAIQNNGMWSPWVEEIPALKNAHFWQLNSDWLNRPTPRTLLAIEQVCEHFASIEQKR.

Positions 1–18 (MMKTLSSLLLLFSVSLQA) are cleaved as a signal peptide. The 251-residue stretch at 23–273 (RVISLAPHAT…EHFASIEQKR (251 aa)) folds into the Fe/B12 periplasmic-binding domain. Cysteine 183 and cysteine 263 are joined by a disulfide.

Belongs to the BtuF family. As to quaternary structure, the complex is composed of two ATP-binding proteins (BtuD), two transmembrane proteins (BtuC) and a solute-binding protein (BtuF).

It localises to the periplasm. In terms of biological role, part of the ABC transporter complex BtuCDF involved in vitamin B12 import. Binds vitamin B12 and delivers it to the periplasmic surface of BtuC. The chain is Vitamin B12-binding protein from Vibrio vulnificus (strain YJ016).